A 216-amino-acid chain; its full sequence is Ras-related protein RABE1a (216 aa).

22–29 (GDSGVGKS) is a binding site for GTP. Residues 44-52 (FITTIGIDF) carry the Effector region motif. Residues 70 to 74 (DTAGQ), 128 to 131 (NKAD), and 159 to 160 (SA) each bind GTP. The tract at residues 185 to 216 (DARAEPQTIKINQSDQGAGTSQATQKSACCGT) is disordered. Residues 193-216 (IKINQSDQGAGTSQATQKSACCGT) are compositionally biased toward polar residues. 2 S-geranylgeranyl cysteine lipidation sites follow: Cys-213 and Cys-214.

This sequence belongs to the small GTPase superfamily. Rab family. As to quaternary structure, interacts with PI5K2.

It localises to the golgi apparatus membrane. Its subcellular location is the cell membrane. Its function is as follows. Involved in membrane trafficking from the Golgi to the plasma membrane. This Arabidopsis thaliana (Mouse-ear cress) protein is Ras-related protein RABE1a (RABE1A).